The sequence spans 394 residues: Cell adhesion molecule 3 (394 aa).

An N-terminal signal peptide occupies residues 1-17 (MHHPVILLLCLSSLAGA). Topologically, residues 18-326 (ANLPPEDLSQ…PIPSTSSIDH (309 aa)) are extracellular. The 99-residue stretch at 22-120 (PEDLSQPVTA…PVRTAKAVVT (99 aa)) folds into the Ig-like V-type domain. Cystine bridges form between cysteine 45–cysteine 105 and cysteine 147–cysteine 204. Ig-like C2-type domains are found at residues 128-223 (PQVS…HKIQ) and 228-306 (PTAK…TFIT). The segment at 217 to 240 (SSSHKIQVQYKPTAKIESRPSMPR) is disordered. The span at 230-240 (AKIESRPSMPR) shows a compositional bias: basic and acidic residues. Cysteine 249 and cysteine 295 are joined by a disulfide. Residues 327–347 (AVIGGVVAVIAFLLFCLLIVL) traverse the membrane as a helical segment. At 348–394 (GRYLIRHKGTYLTHEAKGSDDAPDADTAIINAEGGQGGSDDKKEYFI) the chain is on the cytoplasmic side. The segment at 363 to 394 (AKGSDDAPDADTAIINAEGGQGGSDDKKEYFI) is disordered.

This sequence belongs to the nectin family.

Its subcellular location is the cell membrane. It localises to the cell junction. May be involved in cell-cell adhesion. The polypeptide is Cell adhesion molecule 3 (cadm3) (Xenopus laevis (African clawed frog)).